Consider the following 248-residue polypeptide: 14-3-3 protein gamma-2 (248 aa).

Belongs to the 14-3-3 family. As to quaternary structure, homodimer, and heterodimer with other family members. As to expression, expressed in brain, gill, heart, intestine, kidney, liver, ovary, skeletal muscle, spleen and testis.

The protein localises to the cytoplasm. Adapter protein implicated in the regulation of a large spectrum of both general and specialized signaling pathways. Binds to a large number of partners, usually by recognition of a phosphoserine or phosphothreonine motif. Binding generally results in the modulation of the activity of the binding partner. The chain is 14-3-3 protein gamma-2 from Oncorhynchus mykiss (Rainbow trout).